The following is a 312-amino-acid chain: Methionyl-tRNA formyltransferase (312 aa).

Serine 109–proline 112 is a binding site for (6S)-5,6,7,8-tetrahydrofolate.

Belongs to the Fmt family.

It carries out the reaction L-methionyl-tRNA(fMet) + (6R)-10-formyltetrahydrofolate = N-formyl-L-methionyl-tRNA(fMet) + (6S)-5,6,7,8-tetrahydrofolate + H(+). In terms of biological role, attaches a formyl group to the free amino group of methionyl-tRNA(fMet). The formyl group appears to play a dual role in the initiator identity of N-formylmethionyl-tRNA by promoting its recognition by IF2 and preventing the misappropriation of this tRNA by the elongation apparatus. The sequence is that of Methionyl-tRNA formyltransferase from Listeria monocytogenes serotype 4a (strain HCC23).